A 706-amino-acid polypeptide reads, in one-letter code: Probable serine/threonine-protein kinase zyg-1 (706 aa).

In terms of domain architecture, Protein kinase spans 13–249; that stretch reads YSHLKEIGKG…LTQIVLSEFM (237 aa). Residues 19-27 and K41 each bind ATP; that span reads IGKGGFGVV. Catalysis depends on D131, which acts as the Proton acceptor. Basic and acidic residues-rich tracts occupy residues 261-290 and 323-336; these read SREHSRDGRRQRSREPVRSSRDDRSRDGRA and FDSERGRERDRDSG. 2 disordered regions span residues 261–351 and 566–632; these read SREH…NRSQ and SPSS…VAPS. Low complexity predominate over residues 566 to 579; it reads SPSSLMPSGSSQTS. Polar residues-rich tracts occupy residues 580–592 and 603–629; these read RFPFSNLSNNQPS and KPTSSQRASSANVQRRVSTDENSSPSV.

It belongs to the protein kinase superfamily. Ser/Thr protein kinase family. In terms of assembly, interacts with sel-10. Probably ubiquitinated by the SCF(sel-10) and SCF(lin-23) E3 ubiquitin ligase complexes, leading to its proteasomal degradation.

Its subcellular location is the cytoplasm. The protein resides in the cytoskeleton. The protein localises to the microtubule organizing center. It localises to the centrosome. It is found in the centriole. The catalysed reaction is L-seryl-[protein] + ATP = O-phospho-L-seryl-[protein] + ADP + H(+). The enzyme catalyses L-threonyl-[protein] + ATP = O-phospho-L-threonyl-[protein] + ADP + H(+). Its function is as follows. Protein kinase that plays a central role in centrosome duplication, control of centrosome size, spindle formation and nuclear envelope breakdown during cell divisions. Paternal copy is required to regulate synthesis of daughter centrioles prior to fertilization. Maternal copy regulates centrosome duplication during later cell cycles. Functions upstream of sas-5 and sas-6, and is required for their localization to the centrosome. Its role in nuclear envelope breakdown is mediated by the spindly-like protein spdl-1 and the RZZ complex, which in turn recruits the spindle checkpoint proteins mdf-1 and mdf-2, dynein and dynactin to unattached kinetochores. The chain is Probable serine/threonine-protein kinase zyg-1 from Caenorhabditis elegans.